Here is a 341-residue protein sequence, read N- to C-terminus: Glyceraldehyde-3-phosphate dehydrogenase 4 (341 aa).

NAD(+) contacts are provided by residues 13–14 (RI), D35, and K85. D-glyceraldehyde 3-phosphate-binding positions include 157–159 (SCT), T188, 217–218 (TG), and R240. Catalysis depends on C158, which acts as the Nucleophile. N322 contacts NAD(+).

It belongs to the glyceraldehyde-3-phosphate dehydrogenase family. As to quaternary structure, homotetramer.

The protein localises to the cytoplasm. It carries out the reaction D-glyceraldehyde 3-phosphate + phosphate + NAD(+) = (2R)-3-phospho-glyceroyl phosphate + NADH + H(+). Its pathway is carbohydrate degradation; glycolysis; pyruvate from D-glyceraldehyde 3-phosphate: step 1/5. This Caenorhabditis elegans protein is Glyceraldehyde-3-phosphate dehydrogenase 4 (gpd-4).